We begin with the raw amino-acid sequence, 123 residues long: NADH-quinone oxidoreductase subunit A (123 aa).

3 helical membrane passes run tyrosine 11–leucine 31, leucine 68–isoleucine 88, and isoleucine 93–isoleucine 113.

Belongs to the complex I subunit 3 family. In terms of assembly, NDH-1 is composed of 14 different subunits. Subunits NuoA, H, J, K, L, M, N constitute the membrane sector of the complex.

Its subcellular location is the cell inner membrane. It carries out the reaction a quinone + NADH + 5 H(+)(in) = a quinol + NAD(+) + 4 H(+)(out). NDH-1 shuttles electrons from NADH, via FMN and iron-sulfur (Fe-S) centers, to quinones in the respiratory chain. The immediate electron acceptor for the enzyme in this species is believed to be ubiquinone. Couples the redox reaction to proton translocation (for every two electrons transferred, four hydrogen ions are translocated across the cytoplasmic membrane), and thus conserves the redox energy in a proton gradient. This Rickettsia felis (strain ATCC VR-1525 / URRWXCal2) (Rickettsia azadi) protein is NADH-quinone oxidoreductase subunit A.